The chain runs to 393 residues: MDMLKENVIQNNEARTESSVEPSHPDMMETVPEEQQKPISHIDDLLSETANLMAVKEQLLKEIAENEHIHSMQMRALQNLPQEAILPLQYHADPRRRHRMQKPESYKTVICQAWLESKTCAFAENCRFAHGEEELRPSLIEARQNNKYRTKLCDKYTTTGLCPYGKRCLFIHPDNGPNAYIRADKLFEVSQRHALADLRDQMEHHIMNGGRSTAGPQQFDMFARPCTPDEPAANMPLGPTPVSIRGPRYELPSKKPLETEEAGNRPPSSWPLDPSTFFALDSLNMATRPISPFESMLIGAAGNMQYSMLGKQSTPGGVSGYSSSGSTPSQDSDSSPLTAASAAADAACQANSESAQSILLKSINNPMIGNETTLPIPGLDQLAMDIAKHLELW.

Positions 1–26 (MDMLKENVIQNNEARTESSVEPSHPD) are disordered. Residues 14 to 26 (ARTESSVEPSHPD) show a composition bias toward basic and acidic residues. 2 consecutive C3H1-type zinc fingers follow at residues 105–133 (SYKT…HGEE) and 147–175 (KYRT…HPDN). Disordered stretches follow at residues 227 to 251 (TPDE…RYEL) and 311 to 340 (KQST…LTAA). Positions 313–340 (STPGGVSGYSSSGSTPSQDSDSSPLTAA) are enriched in low complexity. Thr327 is subject to Phosphothreonine; by GSK3.

As to expression, exclusively expressed in the hermaphrodite gonad. Expression only in cellulized oocytes. Widely distributed throughout gonadal oocytes from the mitotic stage to the developing diakinesis stage.

It is found in the cytoplasm. The protein localises to the cytoplasmic granule. The protein resides in the cytoskeleton. It localises to the microtubule organizing center. Its subcellular location is the centrosome. Zinc-finger RNA-binding protein that binds to 5'-UA[AU]-3' motifs in the 3'-UTR of maternal mRNAs to suppress translation in oocytes and embryos. Acts redundantly with oma-1 to control the temporal expression and distribution of maternal proteins and thereby promote meiotic progression, oocyte maturation, fertilization and embryonic development. Also, together with oma-1, is involved in P-granule distribution during embryonic development. The sequence is that of CCCH-type zinc finger protein oma-2 from Caenorhabditis elegans.